Consider the following 382-residue polypeptide: F-box protein At3g19470 (382 aa).

Residues 1-44 (MYNLPRDLPEEVLCRIPLTSLRPVRSTCKKWSTLSKCGSFAKKH) enclose the F-box domain.

In Arabidopsis thaliana (Mouse-ear cress), this protein is F-box protein At3g19470.